A 444-amino-acid polypeptide reads, in one-letter code: Chromosome partition protein MukF (444 aa).

A leucine-zipper region spans residues 211-239 (LDETSGNLRELQDTLNAAGDKLQAQLLRI).

This sequence belongs to the MukF family. As to quaternary structure, interacts, and probably forms a ternary complex, with MukE and MukB via its C-terminal region. The complex formation is stimulated by calcium or magnesium. It is required for an interaction between MukE and MukB.

The protein resides in the cytoplasm. Its subcellular location is the nucleoid. Functionally, involved in chromosome condensation, segregation and cell cycle progression. May participate in facilitating chromosome segregation by condensation DNA from both sides of a centrally located replisome during cell division. Not required for mini-F plasmid partitioning. Probably acts via its interaction with MukB and MukE. Overexpression results in anucleate cells. It has a calcium binding activity. The chain is Chromosome partition protein MukF from Actinobacillus succinogenes (strain ATCC 55618 / DSM 22257 / CCUG 43843 / 130Z).